Reading from the N-terminus, the 211-residue chain is Mitotic spindle assembly checkpoint protein MAD2B (211 aa).

Positions 13 to 203 (QVVADVLSEF…SDILKMQLYV (191 aa)) constitute an HORMA domain. The interval 21–155 (EFLEVAVHLI…FTVLVHTREA (135 aa)) is mediates interaction with REV1 and REV3L and homodimerization.

Homooligomer. Heterodimer with REV3L. This dimer forms the minimal DNA polymerase zeta complex (Pol-zeta2), with REV3L bearing DNA polymerase catalytic activity, although its activity is very low in this context. Component of the tetrameric Pol-zeta complex (Pol-zeta4), which consists of REV3L, MAD2L2, POLD2 and POLD3; Pol-zeta4 is the fully active form of DNA polymerase zeta. Component of the shieldin complex, consisting of SHLD1, SHLD2, SHLD3 and MAD2L2/REV7. Within the complex, SHLD2 forms a scaffold which interacts with a SHLD3-MAD2L2 subcomplex via its N-terminus, and with SHLD1 via its C-terminus. Interacts with REV1. Interacts with ADAM9. Interacts with CHAMP1. Interacts with FZR1 (in complex with the anaphase promoting complex APC). May interact with CDC20. Interacts with RAN. Interacts with ELK1; the interaction is direct and recruits MAD2L2 to ELK1-specific promoters. May interact with the JNK kinases MAPK8 and/or MAPK9 to stimulate ELK1 phosphorylation and transcriptional activity upon DNA damage. Interacts with TCF7L2; prevents its binding to promoters and negatively modulates its transcriptional activity. Interacts with YY1AP1. Interacts with PRCC; the interaction is direct. Interacts with POGZ. Interacts with ASTE1.

The protein localises to the nucleus. The protein resides in the cytoplasm. It is found in the cytoskeleton. Its subcellular location is the spindle. Its function is as follows. Adapter protein able to interact with different proteins and involved in different biological processes. Mediates the interaction between the error-prone DNA polymerase zeta catalytic subunit REV3L and the inserter polymerase REV1, thereby mediating the second polymerase switching in translesion DNA synthesis. Translesion DNA synthesis releases the replication blockade of replicative polymerases, stalled in presence of DNA lesions. Component of the shieldin complex, which plays an important role in repair of DNA double-stranded breaks (DSBs). During G1 and S phase of the cell cycle, the complex functions downstream of TP53BP1 to promote non-homologous end joining (NHEJ) and suppress DNA end resection. Mediates various NHEJ-dependent processes including immunoglobulin class-switch recombination, and fusion of unprotected telomeres. May also regulate another aspect of cellular response to DNA damage through regulation of the JNK-mediated phosphorylation and activation of the transcriptional activator ELK1. Inhibits the FZR1- and probably CDC20-mediated activation of the anaphase promoting complex APC thereby regulating progression through the cell cycle. Regulates TCF7L2-mediated gene transcription and may play a role in epithelial-mesenchymal transdifferentiation. In Rattus norvegicus (Rat), this protein is Mitotic spindle assembly checkpoint protein MAD2B (Mad2l2).